We begin with the raw amino-acid sequence, 377 residues long: Outer membrane porin N (377 aa).

The N-terminal stretch at 1-21 (MKSKVLALLIPALLAAGAAHA) is a signal peptide. The segment covering 175 to 189 (NNEGASNGQEGTNNG) has biased composition (polar residues). The segment at 175–196 (NNEGASNGQEGTNNGRDVRHEN) is disordered.

This sequence belongs to the Gram-negative porin family. Homotrimer.

The protein localises to the cell outer membrane. Forms pores that allow passive diffusion of small molecules across the outer membrane. Non-specific porin. The polypeptide is Outer membrane porin N (ompN) (Escherichia coli (strain K12)).